A 511-amino-acid polypeptide reads, in one-letter code: MLVDGPSERPALCFLLLAVAMSFFGSALSIDETRAHLLLKEKMMRLGGRLVLNTKEELANERLMTLKIAEMKEAMRTLIFPPSMHFFQAKHLIERSQVFNILRMMPKGAALHLHDIGIVTMDWLVRNVTYRPHCHICFTPRGIMQFRFAHPTPRPSEKCSKWILLEDYRKRVQNVTEFDDSLLRNFTLVTQHPEVIYTNQNVVWSKFETIFFTISGLIHYAPVFRDYVFRSMQEFYEDNVLYMEIRARLLPVYELSGEHHDEEWSVKTYQEVAQKFVETHPEFIGIKIIYSDHRSKDVAVIAESIRMAMGLRIKFPTVVAGFDLVGHEDTGHSLHDYKEALMIPAKDGVKLPYFFHAGETDWQGTSIDRNILDALMLNTTRIGHGFALSKHPAVRTYSWKKDIPIEVCPISNQVLKLVSDLRNHPVATLMATGHPMVISSDDPAMFGAKGLSYDFYEVFMGIGGMKADLRTLKQLAMNSIKYSTLLESEKNTFMEIWKKRWDKFIADVATK.

An N-terminal signal peptide occupies residues 1-29 (MLVDGPSERPALCFLLLAVAMSFFGSALS). The segment at 30–100 (IDETRAHLLL…HLIERSQVFN (71 aa)) is dimerization. Residues His-112 and His-114 each coordinate Zn(2+). Asp-115 provides a ligand contact to substrate. An N-linked (GlcNAc...) asparagine glycan is attached at Asn-127. The interval 127-185 (NVTYRPHCHICFTPRGIMQFRFAHPTPRPSEKCSKWILLEDYRKRVQNVTEFDDSLLRN) is PRB domain. A disulfide bridge links Cys-137 with Cys-159. Residues Asn-174 and Asn-185 are each glycosylated (N-linked (GlcNAc...) asparagine). Substrate is bound by residues 204-211 (WSKFETIF), His-293, and Gly-326. His-356 serves as a coordination point for Zn(2+). Catalysis depends on Glu-359, which acts as the Proton donor. Residue Asn-378 is glycosylated (N-linked (GlcNAc...) asparagine). Residue His-384 is the Proton acceptor of the active site. Asp-441 is a Zn(2+) binding site. Position 442 (Asp-442) interacts with substrate.

The protein belongs to the metallo-dependent hydrolases superfamily. Adenosine and AMP deaminases family. ADGF subfamily. In terms of assembly, homodimer. Interacts with adenosine receptors. Binds heparin. Zn(2+) is required as a cofactor. Detected in blood plasma (at protein level). Widely expressed, with most abundant expression in human adult heart, lung, lymphoblasts, and placenta as well as fetal lung, liver, and kidney. In embryo, expressed in the outflow tract and atrium of the developing heart, the VII/VIII cranial nerve ganglion, and the notochord.

The protein resides in the secreted. The enzyme catalyses adenosine + H2O + H(+) = inosine + NH4(+). Functionally, adenosine deaminase that may contribute to the degradation of extracellular adenosine, a signaling molecule that controls a variety of cellular responses. Requires elevated adenosine levels for optimal enzyme activity. Binds to cell surfaces via proteoglycans and may play a role in the regulation of cell proliferation and differentiation, independently of its enzyme activity. This is Adenosine deaminase 2 from Homo sapiens (Human).